The following is a 431-amino-acid chain: Adenylosuccinate synthetase (431 aa).

Residues 12–18 and 40–42 each bind GTP; these read GDEGKGK and GHT. Aspartate 13 (proton acceptor) is an active-site residue. Aspartate 13 and glycine 40 together coordinate Mg(2+). IMP-binding positions include 13–16, 38–41, threonine 130, arginine 144, glutamine 224, threonine 239, and arginine 303; these read DEGK and NAGH. Histidine 41 functions as the Proton donor in the catalytic mechanism. 299–305 contributes to the substrate binding site; that stretch reads STTGRPR. Residues arginine 305, 331-333, and 413-415 each bind GTP; these read KAD and SIG.

It belongs to the adenylosuccinate synthetase family. Homodimer. It depends on Mg(2+) as a cofactor.

The protein resides in the cytoplasm. The catalysed reaction is IMP + L-aspartate + GTP = N(6)-(1,2-dicarboxyethyl)-AMP + GDP + phosphate + 2 H(+). The protein operates within purine metabolism; AMP biosynthesis via de novo pathway; AMP from IMP: step 1/2. Plays an important role in the de novo pathway of purine nucleotide biosynthesis. Catalyzes the first committed step in the biosynthesis of AMP from IMP. The sequence is that of Adenylosuccinate synthetase from Cytophaga hutchinsonii (strain ATCC 33406 / DSM 1761 / CIP 103989 / NBRC 15051 / NCIMB 9469 / D465).